Consider the following 566-residue polypeptide: 15-cis-phytoene desaturase, chloroplastic/chromoplastic (566 aa).

The transit peptide at 1–86 (MVVFGNVSAA…ASLSASFRSA (86 aa)) directs the protein to the chloroplast and chromoplast. Residues alanine 103, 122 to 123 (EA), lysine 130, 147 to 148 (HI), and tyrosine 153 contribute to the FAD site. Arginine 288 serves as a coordination point for substrate. Residues isoleucine 330 and aspartate 519 each contribute to the FAD site. Alanine 527 is a substrate binding site. Methionine 529 is an FAD binding site.

It belongs to the carotenoid/retinoid oxidoreductase family. Homotetramer. The cofactor is FAD.

It localises to the plastid. It is found in the chloroplast. The protein resides in the chromoplast. Its subcellular location is the membrane. It catalyses the reaction 2 a plastoquinone + 15-cis-phytoene = 9,9',15-tri-cis-zeta-carotene + 2 a plastoquinol. It participates in carotenoid biosynthesis; lycopene biosynthesis. In terms of biological role, converts phytoene into zeta-carotene via the intermediary of phytofluene by the symmetrical introduction of two double bonds at the C-11 and C-11' positions of phytoene with a concomitant isomerization of two neighboring double bonds at the C9 and C9' positions from trans to cis. This is 15-cis-phytoene desaturase, chloroplastic/chromoplastic (PDS) from Arabidopsis thaliana (Mouse-ear cress).